Reading from the N-terminus, the 194-residue chain is MFEFITDEDERGQVGIGTLIVFIAMVLVAAIAAGVLINTAGFLQSKGSATGEEASAQVSNRINIVSAYGNVNNEEVDYVNLTVRQAAGADNINLSKSTIQWIGPDKATTLTHANAADKTTLGEEFNTTSIKGNNDNVLVQQSDRIKVIMYAGGVSSKLGAGDEVQLTVTTQYGSKTTYWANVPESLKDKNAVKL.

A propeptide spanning residues 1–12 (MFEFITDEDERG) is cleaved from the precursor.

Belongs to the archaeal flagellin family. Post-translationally, glycosylated.

The protein resides in the archaeal flagellum. In terms of biological role, flagellin is the subunit protein which polymerizes to form the filaments of archaeal flagella. In Halobacterium salinarum (strain ATCC 700922 / JCM 11081 / NRC-1) (Halobacterium halobium), this protein is Flagellin A2 (flaA2).